A 63-amino-acid chain; its full sequence is Protein DsrB (63 aa).

The protein belongs to the DsrB family.

This Yersinia enterocolitica serotype O:8 / biotype 1B (strain NCTC 13174 / 8081) protein is Protein DsrB.